The sequence spans 491 residues: Proline--tRNA ligase (491 aa).

Belongs to the class-II aminoacyl-tRNA synthetase family. ProS type 3 subfamily. Homodimer.

It localises to the cytoplasm. The catalysed reaction is tRNA(Pro) + L-proline + ATP = L-prolyl-tRNA(Pro) + AMP + diphosphate. In terms of biological role, catalyzes the attachment of proline to tRNA(Pro) in a two-step reaction: proline is first activated by ATP to form Pro-AMP and then transferred to the acceptor end of tRNA(Pro). This chain is Proline--tRNA ligase, found in Amoebophilus asiaticus (strain 5a2).